The chain runs to 191 residues: Transmembrane protein 17B (191 aa).

Transmembrane regions (helical) follow at residues 50–70 (MSLYFNMWFFPFWWISEVVML), 83–103 (FILITILIVMTLIEAIRLYLG), 115–135 (LAGFWLLTFLLQFPLILFQLF), and 147–167 (GVHIILALFIFAEVLFGFVAL).

This sequence belongs to the TMEM17 family. Part of the tectonic-like complex (also named B9 complex).

It localises to the cell projection. The protein localises to the cilium membrane. In terms of biological role, transmembrane component of the tectonic-like complex, a complex localized at the transition zone of primary cilia and acting as a barrier that prevents diffusion of transmembrane proteins between the cilia and plasma membranes. Required for ciliogenesis and sonic hedgehog/SHH signaling. The sequence is that of Transmembrane protein 17B (Tmem17b) from Danio rerio (Zebrafish).